We begin with the raw amino-acid sequence, 872 residues long: DNA mismatch repair protein MutS (872 aa).

Positions 1-17 (MSISKIESVNAEKQSPV) are enriched in polar residues. Positions 1–22 (MSISKIESVNAEKQSPVGTEIG) are disordered. Residue 632 to 639 (GPNMGGKS) participates in ATP binding.

Belongs to the DNA mismatch repair MutS family.

Its function is as follows. This protein is involved in the repair of mismatches in DNA. It is possible that it carries out the mismatch recognition step. This protein has a weak ATPase activity. The protein is DNA mismatch repair protein MutS of Azoarcus sp. (strain BH72).